The primary structure comprises 425 residues: Aspartic protease 2 (425 aa).

The N-terminal stretch at 1–16 is a signal peptide; that stretch reads MRSILVLVALIGCIAA. The 350-residue stretch at 72 to 421 folds into the Peptidase A1 domain; it reads YLGEITIGTP…DIEKKRIGFA (350 aa). Aspartate 90 is a catalytic residue. Cysteine 103 and cysteine 145 are joined by a disulfide. Asparagine 163, asparagine 197, and asparagine 304 each carry an N-linked (GlcNAc...) asparagine glycan. Aspartate 316 is an active-site residue. A disulfide bridge connects residues cysteine 351 and cysteine 382. N-linked (GlcNAc...) asparagine glycans are attached at residues asparagine 354 and asparagine 365.

This sequence belongs to the peptidase A1 family. Post-translationally, cleaved into a mature form. As to expression, expressed in intestine, amphidal glands and excretory gland (at protein level).

The protein localises to the secreted. With respect to regulation, inhibited by pepstatin A. In terms of biological role, aspartic protease which cleaves several human serum proteins including hemoglobin, fibrinogen and albumin. Appears to cleave preferentially between P1 (Ala, Leu, Val, Phe and Gly) and P1' (Ala and Leu) residues. The chain is Aspartic protease 2 from Necator americanus (Human hookworm).